Reading from the N-terminus, the 1009-residue chain is Type VII secretion system accessory factor EsaA (1009 aa).

6 consecutive transmembrane segments (helical) span residues Ile-7–Val-27, Ile-822–Phe-842, Val-869–Ile-889, Lys-903–Leu-923, Ser-928–Leu-948, and Ile-979–Phe-999.

It belongs to the EsaA family. As to quaternary structure, homodimer. Interacts with EssB.

The protein localises to the cell membrane. In terms of biological role, component of the type VII secretion system (Ess). Provides together with EssB and other components such as EssC and EssE a secretion platform across the cytoplasmic membrane in the host. The chain is Type VII secretion system accessory factor EsaA from Staphylococcus aureus (strain MSSA476).